A 196-amino-acid polypeptide reads, in one-letter code: ATP-dependent Clp protease proteolytic subunit (196 aa).

Serine 101 functions as the Nucleophile in the catalytic mechanism. Histidine 126 is a catalytic residue.

It belongs to the peptidase S14 family. In terms of assembly, component of the chloroplastic Clp protease core complex.

It localises to the plastid. It is found in the chloroplast stroma. The catalysed reaction is Hydrolysis of proteins to small peptides in the presence of ATP and magnesium. alpha-casein is the usual test substrate. In the absence of ATP, only oligopeptides shorter than five residues are hydrolyzed (such as succinyl-Leu-Tyr-|-NHMec, and Leu-Tyr-Leu-|-Tyr-Trp, in which cleavage of the -Tyr-|-Leu- and -Tyr-|-Trp bonds also occurs).. Its function is as follows. Cleaves peptides in various proteins in a process that requires ATP hydrolysis. Has a chymotrypsin-like activity. Plays a major role in the degradation of misfolded proteins. The polypeptide is ATP-dependent Clp protease proteolytic subunit (Aethionema cordifolium (Lebanon stonecress)).